The following is a 96-amino-acid chain: Co-chaperonin GroES (96 aa).

This sequence belongs to the GroES chaperonin family. As to quaternary structure, heptamer of 7 subunits arranged in a ring. Interacts with the chaperonin GroEL.

The protein resides in the cytoplasm. Functionally, together with the chaperonin GroEL, plays an essential role in assisting protein folding. The GroEL-GroES system forms a nano-cage that allows encapsulation of the non-native substrate proteins and provides a physical environment optimized to promote and accelerate protein folding. GroES binds to the apical surface of the GroEL ring, thereby capping the opening of the GroEL channel. This Paracidovorax citrulli (strain AAC00-1) (Acidovorax citrulli) protein is Co-chaperonin GroES.